The sequence spans 344 residues: N-acetyl-gamma-glutamyl-phosphate reductase (344 aa).

Residue C149 is part of the active site.

Belongs to the NAGSA dehydrogenase family. Type 1 subfamily.

Its subcellular location is the cytoplasm. The enzyme catalyses N-acetyl-L-glutamate 5-semialdehyde + phosphate + NADP(+) = N-acetyl-L-glutamyl 5-phosphate + NADPH + H(+). It participates in amino-acid biosynthesis; L-arginine biosynthesis; N(2)-acetyl-L-ornithine from L-glutamate: step 3/4. In terms of biological role, catalyzes the NADPH-dependent reduction of N-acetyl-5-glutamyl phosphate to yield N-acetyl-L-glutamate 5-semialdehyde. In Thermoanaerobacter pseudethanolicus (strain ATCC 33223 / 39E) (Clostridium thermohydrosulfuricum), this protein is N-acetyl-gamma-glutamyl-phosphate reductase.